The primary structure comprises 323 residues: Fructose-1,6-bisphosphatase class 1 (323 aa).

Residues glutamate 84, aspartate 103, leucine 105, and aspartate 106 each coordinate Mg(2+). Substrate contacts are provided by residues 106–109 (DGSS), asparagine 198, and lysine 264. Mg(2+) is bound at residue glutamate 270.

The protein belongs to the FBPase class 1 family. Homotetramer. The cofactor is Mg(2+).

It localises to the cytoplasm. It carries out the reaction beta-D-fructose 1,6-bisphosphate + H2O = beta-D-fructose 6-phosphate + phosphate. The protein operates within carbohydrate biosynthesis; gluconeogenesis. The protein is Fructose-1,6-bisphosphatase class 1 of Pseudoalteromonas atlantica (strain T6c / ATCC BAA-1087).